The chain runs to 484 residues: Bifunctional protein GlmU (484 aa).

Residues 1–240 (MSASRPAAVM…RTEVEGVNDR (240 aa)) are pyrophosphorylase. Residues 12-15 (LAAG), Lys-26, Gln-79, and 84-85 (GT) contribute to the UDP-N-acetyl-alpha-D-glucosamine site. Asp-113 provides a ligand contact to Mg(2+). UDP-N-acetyl-alpha-D-glucosamine contacts are provided by Gly-150, Glu-165, Asn-180, and Asn-238. Asn-238 lines the Mg(2+) pocket. Residues 241 to 261 (VQLAEARRLLNARLLEQLMRD) are linker. Residues 262–484 (GVTVVDPAST…RARARSEEDR (223 aa)) are N-acetyltransferase. 2 residues coordinate UDP-N-acetyl-alpha-D-glucosamine: Arg-343 and Lys-361. His-373 serves as the catalytic Proton acceptor. The UDP-N-acetyl-alpha-D-glucosamine site is built by Tyr-376 and Asn-387. Residues Ala-390, 396 to 397 (NY), Ser-415, and Ala-433 each bind acetyl-CoA. The tract at residues 457-484 (EGWVERKRPGTPAAQAAERARARSEEDR) is disordered. Positions 474–484 (ERARARSEEDR) are enriched in basic and acidic residues.

The protein in the N-terminal section; belongs to the N-acetylglucosamine-1-phosphate uridyltransferase family. This sequence in the C-terminal section; belongs to the transferase hexapeptide repeat family. As to quaternary structure, homotrimer. Mg(2+) serves as cofactor.

The protein localises to the cytoplasm. The enzyme catalyses alpha-D-glucosamine 1-phosphate + acetyl-CoA = N-acetyl-alpha-D-glucosamine 1-phosphate + CoA + H(+). The catalysed reaction is N-acetyl-alpha-D-glucosamine 1-phosphate + UTP + H(+) = UDP-N-acetyl-alpha-D-glucosamine + diphosphate. The protein operates within nucleotide-sugar biosynthesis; UDP-N-acetyl-alpha-D-glucosamine biosynthesis; N-acetyl-alpha-D-glucosamine 1-phosphate from alpha-D-glucosamine 6-phosphate (route II): step 2/2. It functions in the pathway nucleotide-sugar biosynthesis; UDP-N-acetyl-alpha-D-glucosamine biosynthesis; UDP-N-acetyl-alpha-D-glucosamine from N-acetyl-alpha-D-glucosamine 1-phosphate: step 1/1. Its pathway is bacterial outer membrane biogenesis; LPS lipid A biosynthesis. Catalyzes the last two sequential reactions in the de novo biosynthetic pathway for UDP-N-acetylglucosamine (UDP-GlcNAc). The C-terminal domain catalyzes the transfer of acetyl group from acetyl coenzyme A to glucosamine-1-phosphate (GlcN-1-P) to produce N-acetylglucosamine-1-phosphate (GlcNAc-1-P), which is converted into UDP-GlcNAc by the transfer of uridine 5-monophosphate (from uridine 5-triphosphate), a reaction catalyzed by the N-terminal domain. The chain is Bifunctional protein GlmU from Thermobifida fusca (strain YX).